We begin with the raw amino-acid sequence, 473 residues long: Photosystem II CP43 reaction center protein (473 aa).

Residues methionine 1 to glutamate 14 constitute a propeptide that is removed on maturation. At threonine 15 the chain carries N-acetylthreonine. The residue at position 15 (threonine 15) is a Phosphothreonine. Transmembrane regions (helical) follow at residues leucine 69–alanine 93, leucine 134–asparagine 155, lysine 178–threonine 200, lysine 255–serine 275, and tryptophan 291–alanine 312. Residue glutamate 367 participates in [CaMn4O5] cluster binding. Residues arginine 447–proline 471 form a helical membrane-spanning segment.

This sequence belongs to the PsbB/PsbC family. PsbC subfamily. As to quaternary structure, PSII is composed of 1 copy each of membrane proteins PsbA, PsbB, PsbC, PsbD, PsbE, PsbF, PsbH, PsbI, PsbJ, PsbK, PsbL, PsbM, PsbT, PsbX, PsbY, PsbZ, Psb30/Ycf12, at least 3 peripheral proteins of the oxygen-evolving complex and a large number of cofactors. It forms dimeric complexes. Binds multiple chlorophylls and provides some of the ligands for the Ca-4Mn-5O cluster of the oxygen-evolving complex. It may also provide a ligand for a Cl- that is required for oxygen evolution. PSII binds additional chlorophylls, carotenoids and specific lipids. serves as cofactor.

It is found in the plastid. The protein resides in the chloroplast thylakoid membrane. One of the components of the core complex of photosystem II (PSII). It binds chlorophyll and helps catalyze the primary light-induced photochemical processes of PSII. PSII is a light-driven water:plastoquinone oxidoreductase, using light energy to abstract electrons from H(2)O, generating O(2) and a proton gradient subsequently used for ATP formation. In Anthoceros angustus (Hornwort), this protein is Photosystem II CP43 reaction center protein.